Here is a 371-residue protein sequence, read N- to C-terminus: Glycosyltransferase 8 domain-containing protein 1 (371 aa).

Topologically, residues 1-7 (MSFRKVN) are cytoplasmic. The chain crosses the membrane as a helical; Signal-anchor for type II membrane protein span at residues 8 to 28 (IIILVLAVALFLLVLHHNFLS). Over 29–371 (LSSLLRNEVT…RRYTEISNIK (343 aa)) the chain is Lumenal. N-linked (GlcNAc...) asparagine glycosylation is found at asparagine 249 and asparagine 257.

The protein belongs to the glycosyltransferase 8 family.

Its subcellular location is the membrane. The protein is Glycosyltransferase 8 domain-containing protein 1 (GLT8D1) of Homo sapiens (Human).